Here is a 310-residue protein sequence, read N- to C-terminus: L-lactate dehydrogenase (310 aa).

Residues Met10–Val11, Asp32, Tyr62, and Gly76–Val77 contribute to the NAD(+) site. Substrate is bound by residues Gln79, Arg85, and Asn117 to Asp120. NAD(+) contacts are provided by residues Ala115 to Asn117 and Ser140. Asp145–Arg148 lines the substrate pocket. Residues Arg150 and Gln162–Tyr167 each bind beta-D-fructose 1,6-bisphosphate. His172 serves as the catalytic Proton acceptor. Tyr218 is modified (phosphotyrosine). Thr227 is a binding site for substrate.

It belongs to the LDH/MDH superfamily. LDH family. In terms of assembly, homotetramer.

Its subcellular location is the cytoplasm. The catalysed reaction is (S)-lactate + NAD(+) = pyruvate + NADH + H(+). It participates in fermentation; pyruvate fermentation to lactate; (S)-lactate from pyruvate: step 1/1. Its activity is regulated as follows. Allosterically activated by fructose 1,6-bisphosphate (FBP). It binds two fructose 1,6-bisphosphate (FBP) molecules per tetramer. In terms of biological role, catalyzes the conversion of lactate to pyruvate. This is L-lactate dehydrogenase from Thermus caldophilus.